The sequence spans 203 residues: Glycerol-3-phosphate acyltransferase (203 aa).

A run of 4 helical transmembrane segments spans residues 1 to 21 (MIQTAFTALLLLAIGYLLGAI), 84 to 104 (WLQVLTGLAALAGHIWPVWLG), 117 to 137 (IFLGLAWPVGLACFGLFMAVI), and 157 to 179 (LMLLSGSSSAYVVVSLVASLMVL).

Belongs to the PlsY family. Probably interacts with PlsX.

It localises to the cell inner membrane. It catalyses the reaction an acyl phosphate + sn-glycerol 3-phosphate = a 1-acyl-sn-glycero-3-phosphate + phosphate. It participates in lipid metabolism; phospholipid metabolism. Functionally, catalyzes the transfer of an acyl group from acyl-phosphate (acyl-PO(4)) to glycerol-3-phosphate (G3P) to form lysophosphatidic acid (LPA). This enzyme utilizes acyl-phosphate as fatty acyl donor, but not acyl-CoA or acyl-ACP. This chain is Glycerol-3-phosphate acyltransferase, found in Synechococcus sp. (strain CC9605).